We begin with the raw amino-acid sequence, 76 residues long: UPF0235 protein MRA_1997 (76 aa).

It belongs to the UPF0235 family.

The protein is UPF0235 protein MRA_1997 of Mycobacterium tuberculosis (strain ATCC 25177 / H37Ra).